Here is a 621-residue protein sequence, read N- to C-terminus: Glutamyl-tRNA(Gln) amidotransferase subunit B, mitochondrial (621 aa).

A mitochondrion-targeting transit peptide spans 1 to 41 (MARLPTTELRKYLLTGQFTRRGCLHLRPSPLAPPIPPLRTL). Disordered regions lie at residues 26–86 (LRPS…DNQT) and 106–136 (SKLF…APFD). 2 stretches are compositionally biased toward low complexity: residues 38–57 (LRTL…QIIP) and 110–120 (SPASTPSSSSD).

The protein belongs to the GatB/GatE family. GatB subfamily. Subunit of the heterotrimeric GatCAB amidotransferase (AdT) complex, composed of A, B and C subunits.

It localises to the mitochondrion. The catalysed reaction is L-glutamyl-tRNA(Gln) + L-glutamine + ATP + H2O = L-glutaminyl-tRNA(Gln) + L-glutamate + ADP + phosphate + H(+). Its function is as follows. Allows the formation of correctly charged Gln-tRNA(Gln) through the transamidation of misacylated Glu-tRNA(Gln) in the mitochondria. The reaction takes place in the presence of glutamine and ATP through an activated gamma-phospho-Glu-tRNA(Gln). In Podospora anserina (strain S / ATCC MYA-4624 / DSM 980 / FGSC 10383) (Pleurage anserina), this protein is Glutamyl-tRNA(Gln) amidotransferase subunit B, mitochondrial.